We begin with the raw amino-acid sequence, 600 residues long: Beta-hexosaminidase (600 aa).

The N-terminal stretch at 1–18 (MRISQICTVLSTVTSAVA) is a signal peptide. Residues 19–96 (VGVNPLPAPR…PFPTPTAGAS (78 aa)) constitute a propeptide that is removed on maturation. O-linked (Man...) threonine glycosylation occurs at threonine 78. O-linked (Man...) serine glycosylation is found at serine 83 and serine 84. Active-site charge relay system residues include aspartate 222 and histidine 275. Cysteines 290 and 351 form a disulfide. N-linked (HexNAc...) asparagine glycosylation is present at asparagine 318. Glutamate 346 functions as the Charge relay system in the catalytic mechanism. N-linked (GlcNAc...) asparagine glycosylation is present at asparagine 353. Asparagine 387 carries N-linked (HexNAc...) asparagine glycosylation. Asparagine 428 carries N-linked (GlcNAc...) asparagine glycosylation. A disulfide bridge connects residues cysteine 448 and cysteine 483. N-linked (GlcNAc...) asparagine glycans are attached at residues asparagine 500 and asparagine 525. A disulfide bond links cysteine 583 and cysteine 590.

Belongs to the glycosyl hydrolase 20 family. As to quaternary structure, homodimer. Oligosaccharide moieties may also take part in the dimerization. Dimerization is a pH-dependent reversible process. The individual catalytic cores dimerize and the catalytic core of one subunit in the active dimer interacts with the propeptide of the second subunit. In terms of processing, the precursor of the propeptide is intracellularly processed in the endoplasmic reticulum by a dibasic peptidase, different from Kex2, removing Lys-97--Arg-101 from the precursor producing the activated propeptide. The propeptide binds non-covalently to the catalytic domain. Propeptide binding is necessary for full activation of the enzyme, dimerization of the catalytic domain and secretion of the active enzyme. Post-translationally, O-glycosylated. O-glycosylation (O-mannosylation) at the C-terminus of the propeptide is necessary for full enzyme activity. N-glycosylated. N-glycosylation of the catalytic domain increases the stability and solubility of the enzyme, especially at low pH. Contains high mannose-type (M4-M11) N-glycans at the C-terminus. N-glycan deglycosylation does not affect enzyme activity.

The protein resides in the secreted. It catalyses the reaction Hydrolysis of terminal non-reducing N-acetyl-D-hexosamine residues in N-acetyl-beta-D-hexosaminides.. With respect to regulation, activated by non-covalent binding of the propeptide to the catalytic domain. The concentration of the propeptide is regulated in the endoplasmic reticulum and the propeptide thus regulates the amount of the active enzyme at various stages of the growth cycle. The dimeric enzyme has about half of the maximal activity in the presence of one bound propeptide, but is fully active with two bound O-glycosylated propeptides. Inhibited by N-acetylglucosamine (NAG)-thiazoline. Its function is as follows. Selectively hydrolyzes GlcNAcbeta(1-&gt;4)GlcNAc (N,N'-diacetylchitobiose) and Gal-NAcbeta(1-&gt;4)GlcNAc, but not their C-2 epimers GlcNAcbeta(1-&gt;4)ManNAc or Gal-NAcbeta(1-&gt;4)ManNAc. However, hydrolyzes both GlcNAcbeta(1-&gt;6)GlcNAc and GlcNAcbeta(1-&gt;6)ManNAc. Part of the binary chitinolytic system. Involved in hydrolysis of chitobiose and higher chito-oligomers (produced from cell wall chitin by endochitinases), thus contributing to the formation of germ tubes, fruit-bodies and septa during hyphenation. Hydrolyzes synthetic substrate p-nitrophenyl-beta-N-acetyl-D-glucosaminide (pNP-GlcNAc). Hydrolyzes synthetic substrate p-nitrophenyl-beta-N-acetyl-D-galactosaminide (pNP-GalNAc). Hydrolyzes chromogenic substrate 4-nitrophenyl-2-acetamido-2-deoxyglucopyranoside. The protein is Beta-hexosaminidase of Aspergillus oryzae (Yellow koji mold).